We begin with the raw amino-acid sequence, 133 residues long: ATP synthase epsilon chain (133 aa).

This sequence belongs to the ATPase epsilon chain family. In terms of assembly, F-type ATPases have 2 components, CF(1) - the catalytic core - and CF(0) - the membrane proton channel. CF(1) has five subunits: alpha(3), beta(3), gamma(1), delta(1), epsilon(1). CF(0) has three main subunits: a, b and c.

The protein resides in the cell membrane. Produces ATP from ADP in the presence of a proton gradient across the membrane. The sequence is that of ATP synthase epsilon chain from Clostridium perfringens (strain ATCC 13124 / DSM 756 / JCM 1290 / NCIMB 6125 / NCTC 8237 / Type A).